The sequence spans 166 residues: Small ribosomal subunit protein uS5 (166 aa).

Residues Leu-11–Ile-74 form the S5 DRBM domain.

The protein belongs to the universal ribosomal protein uS5 family. In terms of assembly, part of the 30S ribosomal subunit. Contacts proteins S4 and S8.

Functionally, with S4 and S12 plays an important role in translational accuracy. In terms of biological role, located at the back of the 30S subunit body where it stabilizes the conformation of the head with respect to the body. The polypeptide is Small ribosomal subunit protein uS5 (Wigglesworthia glossinidia brevipalpis).